Consider the following 423-residue polypeptide: Protein CLP1 homolog (423 aa).

ATP is bound by residues E16, K57, and 119-124 (DVGKST).

This sequence belongs to the Clp1 family. Clp1 subfamily.

It localises to the nucleus. Required for endonucleolytic cleavage during polyadenylation-dependent pre-mRNA 3'-end formation. In Drosophila sechellia (Fruit fly), this protein is Protein CLP1 homolog (cbc).